Consider the following 268-residue polypeptide: Ribosomal RNA large subunit methyltransferase E (268 aa).

Positions Met-1 to Thr-60 are disordered. Over residues Ser-26 to Leu-52 the composition is skewed to polar residues. S-adenosyl-L-methionine is bound by residues Gly-115, Trp-117, Asp-133, Asp-149, and Asp-173. Lys-213 serves as the catalytic Proton acceptor.

Belongs to the class I-like SAM-binding methyltransferase superfamily. RNA methyltransferase RlmE family.

The protein resides in the cytoplasm. The enzyme catalyses uridine(2552) in 23S rRNA + S-adenosyl-L-methionine = 2'-O-methyluridine(2552) in 23S rRNA + S-adenosyl-L-homocysteine + H(+). Specifically methylates the uridine in position 2552 of 23S rRNA at the 2'-O position of the ribose in the fully assembled 50S ribosomal subunit. This Gluconobacter oxydans (strain 621H) (Gluconobacter suboxydans) protein is Ribosomal RNA large subunit methyltransferase E.